A 347-amino-acid polypeptide reads, in one-letter code: NADH-quinone oxidoreductase subunit H (347 aa).

Transmembrane regions (helical) follow at residues 21-41 (IAGILLIALPLMLGVAMIIYA), 87-107 (GLFLIAPIITFTVALMAWAVI), 120-140 (VGLLYVLAISSLGVYGVVIAG), 160-180 (ISYEVSIGFILICVVLWAGTF), 194-214 (WIINGFVANPLLFPMWVMFLI), 259-279 (LLMCALNAVLFWGGYLPPLDI), 282-302 (LYLVPGFVWLLLKILFFFFIF), and 324-344 (VFLPVSLLFVFLVSGYLMATG).

This sequence belongs to the complex I subunit 1 family. In terms of assembly, NDH-1 is composed of 14 different subunits. Subunits NuoA, H, J, K, L, M, N constitute the membrane sector of the complex.

Its subcellular location is the cell inner membrane. The catalysed reaction is a quinone + NADH + 5 H(+)(in) = a quinol + NAD(+) + 4 H(+)(out). In terms of biological role, NDH-1 shuttles electrons from NADH, via FMN and iron-sulfur (Fe-S) centers, to quinones in the respiratory chain. The immediate electron acceptor for the enzyme in this species is believed to be ubiquinone. Couples the redox reaction to proton translocation (for every two electrons transferred, four hydrogen ions are translocated across the cytoplasmic membrane), and thus conserves the redox energy in a proton gradient. This subunit may bind ubiquinone. This chain is NADH-quinone oxidoreductase subunit H, found in Novosphingobium aromaticivorans (strain ATCC 700278 / DSM 12444 / CCUG 56034 / CIP 105152 / NBRC 16084 / F199).